We begin with the raw amino-acid sequence, 385 residues long: Cytochrome b (385 aa).

Transmembrane regions (helical) follow at residues 34–54 (FGSLTGLCLALQIISGLLLTM), 78–99 (WFIRNVHISGASLFFTCMFIHI), 114–134 (WYSGVILFILSMLTAFLGYVL), and 179–199 (FLVLHFLMPFSMIAVSLIHLV). Residues His-84 and His-98 each contribute to the heme b site. His-183 and His-197 together coordinate heme b. His-202 is an a ubiquinone binding site. The next 4 membrane-spanning stretches (helical) occupy residues 227 to 247 (FKDILGFSFLLTFLITFSLLL), 289 to 309 (LAGIIALVMSLSVLLLMPILI), 321 to 341 (LMQVTFWLMVCNFIFLSWLGA), and 348 to 368 (FILMSQISSFIYFFIFFVMFP).

This sequence belongs to the cytochrome b family. As to quaternary structure, the cytochrome bc1 complex contains 3 respiratory subunits (MT-CYB, CYC1 and UQCRFS1), 2 core proteins (UQCRC1 and UQCRC2) and probably 6 low-molecular weight proteins. The cofactor is heme b.

The protein localises to the mitochondrion inner membrane. Its function is as follows. Component of the ubiquinol-cytochrome c reductase complex (complex III or cytochrome b-c1 complex) that is part of the mitochondrial respiratory chain. The b-c1 complex mediates electron transfer from ubiquinol to cytochrome c. Contributes to the generation of a proton gradient across the mitochondrial membrane that is then used for ATP synthesis. The chain is Cytochrome b (MT-CYB) from Eptatretus burgeri (Inshore hagfish).